Reading from the N-terminus, the 463-residue chain is Hexokinase-7 (463 aa).

The region spanning 7 to 456 is the Hexokinase domain; the sequence is AAAEQVVAAL…SGLGAALIAA (450 aa). The hexokinase small subdomain stretch occupies residues 62 to 199; the sequence is NGTEEGLFYA…GLDMRVSALI (138 aa). ADP contacts are provided by G76, T77, and N78. 4 residues coordinate D-glucose: T165, K166, N200, and D201. Positions 200–445 are hexokinase large subdomain; that stretch reads NDTVGTLAAG…KSVAVKLAND (246 aa). An ADP-binding site is contributed by T224. 3 residues coordinate D-glucose: N227, E255, and E286. G410 is a binding site for ADP.

It belongs to the hexokinase family. In terms of tissue distribution, expressed in roots, leaves, flowers, immature seeds and seed coat.

Its subcellular location is the cytoplasm. It catalyses the reaction a D-hexose + ATP = a D-hexose 6-phosphate + ADP + H(+). It carries out the reaction D-fructose + ATP = D-fructose 6-phosphate + ADP + H(+). The catalysed reaction is D-glucose + ATP = D-glucose 6-phosphate + ADP + H(+). The protein operates within carbohydrate metabolism; hexose metabolism. Its pathway is carbohydrate degradation; glycolysis; D-glyceraldehyde 3-phosphate and glycerone phosphate from D-glucose: step 1/4. Its function is as follows. Fructose and glucose phosphorylating enzyme. Functions in sugar signaling via a glycolysis-dependent manner under aerobic conditions, but its signaling role is suppressed when oxygen is deficient. This chain is Hexokinase-7 (HXK7), found in Oryza sativa subsp. japonica (Rice).